Here is a 64-residue protein sequence, read N- to C-terminus: Toxin BmCa-1 (64 aa).

Residues Met1–Ala18 form the signal peptide. Residues Glu19–Arg27 constitute a propeptide that is removed on maturation. Cystine bridges form between Cys29–Cys43, Cys36–Cys49, and Cys42–Cys58.

The protein belongs to the scorpion calcin-like family. In terms of tissue distribution, expressed by the venom gland.

Its subcellular location is the secreted. In terms of biological role, may increase intracellular calcium release through the activation of nuclear inositol 1,4,5-trisphosphate receptors (ITPR) of cardiomyocytes, thereby causing an increase in the contraction frequency of these cells. The sequence is that of Toxin BmCa-1 from Olivierus martensii (Manchurian scorpion).